The sequence spans 39 residues: ITCSKVYGDIISCVGYIKGGPIACVGYLKGGPLQQYVHN.

Belongs to the plant LTP family.

Functionally, plant non-specific lipid-transfer proteins transfer phospholipids as well as galactolipids across membranes. May play a role in wax or cutin deposition in the cell walls of expanding epidermal cells and certain secretory tissues. In Musa acuminata (Banana), this protein is Non-specific lipid-transfer protein.